Here is a 332-residue protein sequence, read N- to C-terminus: Ribosomal RNA small subunit methyltransferase C (332 aa).

The protein belongs to the methyltransferase superfamily. RsmC family. In terms of assembly, monomer.

Its subcellular location is the cytoplasm. The catalysed reaction is guanosine(1207) in 16S rRNA + S-adenosyl-L-methionine = N(2)-methylguanosine(1207) in 16S rRNA + S-adenosyl-L-homocysteine + H(+). Specifically methylates the guanine in position 1207 of 16S rRNA in the 30S particle. In Pseudomonas fluorescens (strain ATCC BAA-477 / NRRL B-23932 / Pf-5), this protein is Ribosomal RNA small subunit methyltransferase C.